The primary structure comprises 273 residues: Exosome complex component Rrp42 (273 aa).

It belongs to the RNase PH family. Rrp42 subfamily. Component of the archaeal exosome complex. Forms a hexameric ring-like arrangement composed of 3 Rrp41-Rrp42 heterodimers. The hexameric ring associates with a trimer of Rrp4 and/or Csl4 subunits.

The protein localises to the cytoplasm. Functionally, non-catalytic component of the exosome, which is a complex involved in RNA degradation. Contributes to the structuring of the Rrp41 active site. The protein is Exosome complex component Rrp42 of Thermococcus gammatolerans (strain DSM 15229 / JCM 11827 / EJ3).